A 101-amino-acid chain; its full sequence is Small ribosomal subunit protein uS14 (101 aa).

It belongs to the universal ribosomal protein uS14 family. In terms of assembly, part of the 30S ribosomal subunit. Contacts proteins S3 and S10.

Functionally, binds 16S rRNA, required for the assembly of 30S particles and may also be responsible for determining the conformation of the 16S rRNA at the A site. The polypeptide is Small ribosomal subunit protein uS14 (Ruthia magnifica subsp. Calyptogena magnifica).